The following is a 135-amino-acid chain: ATP synthase epsilon chain (135 aa).

The protein belongs to the ATPase epsilon chain family. In terms of assembly, F-type ATPases have 2 components, CF(1) - the catalytic core - and CF(0) - the membrane proton channel. CF(1) has five subunits: alpha(3), beta(3), gamma(1), delta(1), epsilon(1). CF(0) has three main subunits: a, b and c.

It localises to the cell inner membrane. In terms of biological role, produces ATP from ADP in the presence of a proton gradient across the membrane. The polypeptide is ATP synthase epsilon chain (Rhodopseudomonas palustris (strain BisB5)).